The following is a 75-amino-acid chain: uncharacterized protein (75 aa).

The N-terminal stretch at 1-18 is a signal peptide; that stretch reads MRKYLSARSMCCSFFSCA.

This is an uncharacterized protein from Treponema pallidum (strain Nichols).